Here is a 494-residue protein sequence, read N- to C-terminus: DnaJ homolog subfamily C member 7 (494 aa).

A2 carries the N-acetylalanine modification. 9 TPR repeats span residues A28 to N61, A62 to F95, V96 to N129, V142 to C175, R177 to N209, A210 to H243, L256 to N289, A294 to Y327, and I328 to K361. Positions D381–Q451 constitute a J domain. S393 is subject to Phosphoserine.

Associates with complexes containing chaperones HSP70 and HSP90. Interacts with the GAP domain of NF1. Interacts with HSP90AA1. Interacts with HSPA1A/B; the interaction is enhanced by ATP. Interacts with HSP90AB1. Interacts with PGR. Interacts with RAD9A; the interaction is interrupted by UV and heat shock treatments. Interacts with HUS1 and RAD1. Interacts with NR1I3. The DNAJC7-NR1I3 complex may also include HSP90. Interacts with HSPA8.

Its subcellular location is the cytoplasm. It localises to the nucleus. It is found in the cytoskeleton. In terms of biological role, acts as a co-chaperone regulating the molecular chaperones HSP70 and HSP90 in folding of steroid receptors, such as the glucocorticoid receptor and the progesterone receptor. Proposed to act as a recycling chaperone by facilitating the return of chaperone substrates to early stages of chaperoning if further folding is required. In vitro, induces ATP-independent dissociation of HSP90 but not of HSP70 from the chaperone-substrate complexes. Recruits NR1I3 to the cytoplasm. This Homo sapiens (Human) protein is DnaJ homolog subfamily C member 7 (DNAJC7).